The chain runs to 939 residues: Zinc finger RNA-binding protein 2 (939 aa).

Disordered stretches follow at residues M1–S72, G116–S185, F217–G264, H289–G314, L360–R389, A401–P449, R545–D590, and R906–V939. Polar residues-rich tracts occupy residues P137–P147 and Q157–T184. Pro residues predominate over residues F217–P239. The stretch at K516–E549 forms a coiled coil. A DZF domain is found at R570–G935. Positions R906–R916 are enriched in basic residues.

The sequence is that of Zinc finger RNA-binding protein 2 (ZFR2) from Homo sapiens (Human).